Consider the following 58-residue polypeptide: uncharacterized protein (58 aa).

This is an uncharacterized protein from Saccharomyces cerevisiae (strain ATCC 204508 / S288c) (Baker's yeast).